The sequence spans 108 residues: UPF0145 protein Ava_0420 (108 aa).

The protein belongs to the UPF0145 family.

The protein is UPF0145 protein Ava_0420 of Trichormus variabilis (strain ATCC 29413 / PCC 7937) (Anabaena variabilis).